A 392-amino-acid polypeptide reads, in one-letter code: Iron-sulfur cluster assembly SufBD family protein ML0594 (392 aa).

The protein belongs to the iron-sulfur cluster assembly SufBD family.

The polypeptide is Iron-sulfur cluster assembly SufBD family protein ML0594 (Mycobacterium leprae (strain TN)).